The following is a 284-amino-acid chain: Ermin (284 aa).

Positions Met-1–Gln-23 are disordered. The residue at position 73 (Ser-73) is a Phosphoserine. The tract at residues Arg-110–Ser-251 is disordered. Basic and acidic residues-rich tracts occupy residues Glu-126–Lys-140 and Leu-171–Asp-183. The span at Glu-184–Glu-200 shows a compositional bias: acidic residues. Residues Val-201 to Gly-220 show a composition bias toward basic and acidic residues. Residues Ser-214, Ser-226, Ser-230, and Ser-233 each carry the phosphoserine modification. Residues Asp-225–Ala-235 are compositionally biased toward low complexity. Residue Thr-237 is modified to Phosphothreonine. The interval Lys-265–Leu-284 is binds actin.

As to quaternary structure, binds actin. Highly expressed in adult and fetal brain. Expressed at intermediate levels in the lung and liver.

Its subcellular location is the cytoplasm. The protein resides in the cytoskeleton. In terms of biological role, plays a role in cytoskeletal rearrangements during the late wrapping and/or compaction phases of myelinogenesis as well as in maintenance and stability of myelin sheath in the adult. May play an important role in late-stage oligodendroglia maturation, myelin/Ranvier node formation during CNS development, and in the maintenance and plasticity of related structures in the mature CNS. This is Ermin (ERMN) from Homo sapiens (Human).